Here is a 172-residue protein sequence, read N- to C-terminus: C-phycocyanin subunit beta (172 aa).

Residue Asn-72 is modified to N4-methylasparagine. (2R,3E)-phycocyanobilin contacts are provided by Cys-82 and Cys-153.

The protein belongs to the phycobiliprotein family. In terms of assembly, heterodimer of an alpha and a beta subunit, which further assembles into trimers and the trimers into hexamers. In terms of processing, contains two covalently linked bilin chromophores. The chromophore on position 82 is added by the phycocyanobilin lyase CpcUS, while the chromophore on position 153 is added by the phycocyanobilin lyase CpcT.

The protein localises to the cellular thylakoid membrane. Functionally, light-harvesting photosynthetic bile pigment-protein from the phycobiliprotein complex (phycobilisome, PBS). Phycocyanin is the major phycobiliprotein in the PBS rod. This chain is C-phycocyanin subunit beta (cpcB), found in Picosynechococcus sp. (strain ATCC 27264 / PCC 7002 / PR-6) (Agmenellum quadruplicatum).